The following is a 150-amino-acid chain: UPF0756 membrane protein STH2648 (150 aa).

A run of 4 helical transmembrane segments spans residues 13–33, 52–72, 85–105, and 111–131; these read ALGVVARNALIVTAAGVVLIL, AGLIFLLIAVLVPFATGEVGW, LAAILGGIIAAVLSGYGVTLL, and VIVGMVVGTILGVVLFKGIPV.

This sequence belongs to the UPF0756 family.

It is found in the cell membrane. The sequence is that of UPF0756 membrane protein STH2648 from Symbiobacterium thermophilum (strain DSM 24528 / JCM 14929 / IAM 14863 / T).